Reading from the N-terminus, the 259-residue chain is Ribosomal RNA small subunit methyltransferase J (259 aa).

S-adenosyl-L-methionine is bound by residues 101–102, 117–118, 153–154, and aspartate 176; these read RD, ER, and SS.

The protein belongs to the methyltransferase superfamily. RsmJ family.

The protein resides in the cytoplasm. It catalyses the reaction guanosine(1516) in 16S rRNA + S-adenosyl-L-methionine = N(2)-methylguanosine(1516) in 16S rRNA + S-adenosyl-L-homocysteine + H(+). Specifically methylates the guanosine in position 1516 of 16S rRNA. This is Ribosomal RNA small subunit methyltransferase J from Vibrio parahaemolyticus serotype O3:K6 (strain RIMD 2210633).